Reading from the N-terminus, the 345-residue chain is Nicotinate-nucleotide--dimethylbenzimidazole phosphoribosyltransferase (345 aa).

Glu312 functions as the Proton acceptor in the catalytic mechanism.

Belongs to the CobT family.

The enzyme catalyses 5,6-dimethylbenzimidazole + nicotinate beta-D-ribonucleotide = alpha-ribazole 5'-phosphate + nicotinate + H(+). Its pathway is nucleoside biosynthesis; alpha-ribazole biosynthesis; alpha-ribazole from 5,6-dimethylbenzimidazole: step 1/2. Catalyzes the synthesis of alpha-ribazole-5'-phosphate from nicotinate mononucleotide (NAMN) and 5,6-dimethylbenzimidazole (DMB). In Bacteroides fragilis (strain YCH46), this protein is Nicotinate-nucleotide--dimethylbenzimidazole phosphoribosyltransferase.